The primary structure comprises 393 residues: SH3 domain-binding protein 5-like (393 aa).

Disordered stretches follow at residues Met1–Arg59 and His272–Thr332. Thr13 is modified (phosphothreonine). The span at Leu18 to Pro28 shows a compositional bias: basic and acidic residues. 2 positions are modified to phosphoserine: Ser30 and Ser49. Coiled-coil stretches lie at residues Arg59 to Ala140 and Trp169 to His272. Over residues Gly304–Gly313 the composition is skewed to gly residues. Low complexity predominate over residues Glu317–Thr332. Phosphoserine is present on residues Ser343, Ser350, Ser358, Ser362, and Ser378. Residues Asp364–Leu393 are disordered. Positions Gly384–Leu393 are enriched in basic residues.

Belongs to the SH3BP5 family.

Functionally, functions as a guanine nucleotide exchange factor (GEF) for RAB11A. This is SH3 domain-binding protein 5-like (SH3BP5L) from Pongo abelii (Sumatran orangutan).